A 116-amino-acid polypeptide reads, in one-letter code: Beta-2-microglobulin (116 aa).

Positions 1-19 (MRALITFALLCLLYITVQG) are cleaved as a signal peptide. The 88-residue stretch at 24 to 111 (PKVHVYSHFP…RHMKETKKFS (88 aa)) folds into the Ig-like C1-type domain. A disulfide bridge connects residues cysteine 44 and cysteine 99.

The protein belongs to the beta-2-microglobulin family. As to quaternary structure, heterodimer of an alpha chain and a beta chain. Beta-2-microglobulin is the beta-chain of major histocompatibility complex class I molecules.

It is found in the secreted. Component of the class I major histocompatibility complex (MHC). Involved in the presentation of peptide antigens to the immune system. In Danio rerio (Zebrafish), this protein is Beta-2-microglobulin (b2m).